The following is a 77-amino-acid chain: Acyl carrier protein (77 aa).

The region spanning 1-76 (MSLEDDVKAI…DVIKYIQERQ (76 aa)) is the Carrier domain. Position 36 is an O-(pantetheine 4'-phosphoryl)serine (Ser-36).

It belongs to the acyl carrier protein (ACP) family. In terms of processing, 4'-phosphopantetheine is transferred from CoA to a specific serine of apo-ACP by AcpS. This modification is essential for activity because fatty acids are bound in thioester linkage to the sulfhydryl of the prosthetic group.

The protein localises to the cytoplasm. The protein operates within lipid metabolism; fatty acid biosynthesis. Carrier of the growing fatty acid chain in fatty acid biosynthesis. The protein is Acyl carrier protein of Chlamydia trachomatis serovar A (strain ATCC VR-571B / DSM 19440 / HAR-13).